Consider the following 807-residue polypeptide: Probable E3 ubiquitin-protein ligase mug30 (807 aa).

One can recognise an HECT domain in the interval 453–807 (RNKDFRKALK…LLETNGFNIR (355 aa)). The active-site Glycyl thioester intermediate is the Cys-775.

The protein resides in the cytoplasm. It localises to the cytoskeleton. Its subcellular location is the microtubule organizing center. The protein localises to the spindle pole body. It catalyses the reaction S-ubiquitinyl-[E2 ubiquitin-conjugating enzyme]-L-cysteine + [acceptor protein]-L-lysine = [E2 ubiquitin-conjugating enzyme]-L-cysteine + N(6)-ubiquitinyl-[acceptor protein]-L-lysine.. Its pathway is protein modification; protein ubiquitination. In terms of biological role, probable E3 ubiquitin-protein ligase. Has a role in meiosis. This chain is Probable E3 ubiquitin-protein ligase mug30 (mug30), found in Schizosaccharomyces pombe (strain 972 / ATCC 24843) (Fission yeast).